A 220-amino-acid polypeptide reads, in one-letter code: Probable N-acetyl-alpha-D-glucosaminyl L-malate deacetylase 2 (220 aa).

Histidine 11, aspartate 14, and histidine 125 together coordinate Zn(2+).

Belongs to the PIGL family. Zn(2+) is required as a cofactor.

It carries out the reaction (S)-malyl N-acetyl-alpha-D-glucosaminide + H2O = (S)-malyl alpha-D-glucosaminide + acetate. In terms of biological role, involved in bacillithiol (BSH) biosynthesis. Catalyzes the second step of the pathway, the deacetylation of N-acetylglucosaminylmalate (GlcNAc-Mal) to glucosamine malate (GlcN-Mal). Has weak activity compared with bshB1. In Bacillus cereus (strain ATCC 14579 / DSM 31 / CCUG 7414 / JCM 2152 / NBRC 15305 / NCIMB 9373 / NCTC 2599 / NRRL B-3711), this protein is Probable N-acetyl-alpha-D-glucosaminyl L-malate deacetylase 2.